Here is a 39-residue protein sequence, read N- to C-terminus: Photosystem II reaction center protein Y (39 aa).

Residues arginine 4–glycine 24 traverse the membrane as a helical segment.

The protein belongs to the PsbY family. As to quaternary structure, PSII is composed of 1 copy each of membrane proteins PsbA, PsbB, PsbC, PsbD, PsbE, PsbF, PsbH, PsbI, PsbJ, PsbK, PsbL, PsbM, PsbT, PsbX, PsbY, PsbZ, Psb30/Ycf12, peripheral proteins PsbO, CyanoQ (PsbQ), PsbU, PsbV and a large number of cofactors. It forms dimeric complexes.

The protein resides in the cellular thylakoid membrane. Its function is as follows. Loosely associated component of the core of photosystem II (PSII), it is not always seen in crystals. PSII is a light-driven water plastoquinone oxidoreductase, using light energy to abstract electrons from H(2)O, generating a proton gradient subsequently used for ATP formation. This Synechocystis sp. (strain ATCC 27184 / PCC 6803 / Kazusa) protein is Photosystem II reaction center protein Y.